An 85-amino-acid polypeptide reads, in one-letter code: ATP synthase subunit c (85 aa).

2 helical membrane passes run 10-30 and 53-73; these read IAVG…FAIL and FIIA…ALLF.

It belongs to the ATPase C chain family. As to quaternary structure, F-type ATPases have 2 components, F(1) - the catalytic core - and F(0) - the membrane proton channel. F(1) has five subunits: alpha(3), beta(3), gamma(1), delta(1), epsilon(1). F(0) has three main subunits: a(1), b(2) and c(10-14). The alpha and beta chains form an alternating ring which encloses part of the gamma chain. F(1) is attached to F(0) by a central stalk formed by the gamma and epsilon chains, while a peripheral stalk is formed by the delta and b chains.

The protein resides in the cell inner membrane. F(1)F(0) ATP synthase produces ATP from ADP in the presence of a proton or sodium gradient. F-type ATPases consist of two structural domains, F(1) containing the extramembraneous catalytic core and F(0) containing the membrane proton channel, linked together by a central stalk and a peripheral stalk. During catalysis, ATP synthesis in the catalytic domain of F(1) is coupled via a rotary mechanism of the central stalk subunits to proton translocation. Functionally, key component of the F(0) channel; it plays a direct role in translocation across the membrane. A homomeric c-ring of between 10-14 subunits forms the central stalk rotor element with the F(1) delta and epsilon subunits. The chain is ATP synthase subunit c from Aliivibrio salmonicida (strain LFI1238) (Vibrio salmonicida (strain LFI1238)).